We begin with the raw amino-acid sequence, 202 residues long: GTP cyclohydrolase-2 (202 aa).

Arg48–Glu52 contributes to the GTP binding site. Residues Cys53, Cys64, and Cys66 each contribute to the Zn(2+) site. GTP contacts are provided by residues Gln69, Glu91 to Arg93, and Thr113. Catalysis depends on Asp125, which acts as the Proton acceptor. Arg127 acts as the Nucleophile in catalysis. Thr148 and Lys153 together coordinate GTP.

This sequence belongs to the GTP cyclohydrolase II family. It depends on Zn(2+) as a cofactor.

It catalyses the reaction GTP + 4 H2O = 2,5-diamino-6-hydroxy-4-(5-phosphoribosylamino)-pyrimidine + formate + 2 phosphate + 3 H(+). Its pathway is cofactor biosynthesis; riboflavin biosynthesis; 5-amino-6-(D-ribitylamino)uracil from GTP: step 1/4. In terms of biological role, catalyzes the conversion of GTP to 2,5-diamino-6-ribosylamino-4(3H)-pyrimidinone 5'-phosphate (DARP), formate and pyrophosphate. The sequence is that of GTP cyclohydrolase-2 from Colwellia psychrerythraea (strain 34H / ATCC BAA-681) (Vibrio psychroerythus).